A 140-amino-acid polypeptide reads, in one-letter code: MALLTVNLNVVSAEESLFSGSIKSLQITGSEGELGIMPGHAPLLTSLKPGMALITKADGTEEVIYLSGGMLEVQPNNVTVLADVATRAADLDEEAALAAKQRAEDNMNAHGGDVDYAAVAAELARAVAQLRVIQATSKHS.

Belongs to the ATPase epsilon chain family. F-type ATPases have 2 components, CF(1) - the catalytic core - and CF(0) - the membrane proton channel. CF(1) has five subunits: alpha(3), beta(3), gamma(1), delta(1), epsilon(1). CF(0) has three main subunits: a, b and c.

It localises to the cell inner membrane. Functionally, produces ATP from ADP in the presence of a proton gradient across the membrane. This chain is ATP synthase epsilon chain, found in Colwellia psychrerythraea (strain 34H / ATCC BAA-681) (Vibrio psychroerythus).